Here is a 245-residue protein sequence, read N- to C-terminus: Anti-Pycsar protein Apyc1 (245 aa).

The beta-lactamase-like stretch occupies residues 19 to 219 (FNNNALLYAG…EIQSQILLKH (201 aa)). Zn(2+)-binding residues include H61, H63, D65, H66, H145, D165, and H219.

Belongs to the anti-Pycsar protein Apyc1 family. In terms of assembly, homodimer. Zn(2+) serves as cofactor.

It catalyses the reaction 3',5'-cyclic CMP + H2O = CMP + H(+). The catalysed reaction is 3',5'-cyclic UMP + H2O = UMP + H(+). In terms of biological role, counteracts the endogenous Pycsar antiviral defense system. Phosphodiesterase that enables metal-dependent hydrolysis of host cyclic nucleotide Pycsar defense signals such as cCMP and cUMP. The chain is Anti-Pycsar protein Apyc1 from Paenibacillus sp. (strain J14).